Consider the following 409-residue polypeptide: Inner membrane transport protein YqeG (409 aa).

The Periplasmic portion of the chain corresponds to 1 to 25 (MSNIWSKEETLWSFALYGTAVGAGT). The helical transmembrane segment at 26-46 (LFLPIQLGSAGAVVLFITALV) threads the bilayer. Residues 47–87 (AWPLTYWPHKALCQFILSSKTSAGEGITGAVTHYYGKKIGN) lie on the Cytoplasmic side of the membrane. Residues 88 to 108 (LITTLYFIAFFVVVLIYAVAI) form a helical membrane-spanning segment. Residues 109 to 127 (TNSLTEQLAKHMVIDLRIR) lie on the Periplasmic side of the membrane. A helical membrane pass occupies residues 128 to 148 (MLVSLGVVLILNLIFLMGRHA). Residues 149–151 (TIR) lie on the Cytoplasmic side of the membrane. The helical transmembrane segment at 152-172 (VMGFLVFPLIAYFLFLSIYLV) threads the bilayer. Residues 173 to 193 (GSWQPDLLTTQVEFNQNTLHQ) lie on the Periplasmic side of the membrane. Residues 194-214 (IWISIPVMVFAFSHTPIISTF) form a helical membrane-spanning segment. The Cytoplasmic portion of the chain corresponds to 215 to 235 (AIDRREKYGEHAMDKCKKIMK). The chain crosses the membrane as a helical span at residues 236 to 256 (VAYLIICISVLFFVFSCLLSI). Topologically, residues 257–276 (PPSYIEAAKEEGVTILSALS) are periplasmic. The chain crosses the membrane as a helical span at residues 277–297 (MLPNAPAWLSISGIIVAVVAM). The Cytoplasmic segment spans residues 298 to 329 (SKSFLGTYFGVIEGATEVVKTTLQQVGVKKSR). A helical membrane pass occupies residues 330–350 (AFNRALSIMLVSLITFIVCCI). The Periplasmic portion of the chain corresponds to 351–353 (NPN). Residues 354-374 (AISMIYAISGPLIAMILFIMP) traverse the membrane as a helical segment. Over 375-388 (TLSTYLIPALKPWR) the chain is Cytoplasmic. The chain crosses the membrane as a helical span at residues 389–409 (SIGNLITLIVGILCVSVMFFS).

It belongs to the amino acid/polyamine transporter 2 family. SdaC/TdcC subfamily.

Its subcellular location is the cell inner membrane. The protein is Inner membrane transport protein YqeG (yqeG) of Escherichia coli O6:H1 (strain CFT073 / ATCC 700928 / UPEC).